The primary structure comprises 249 residues: MIYTSSKSLQYLAVPIYTIFKNLTIILIAYGEVLFFGGKVTSMELTSFIMMVLSSVVATWGDQQAIAIKASSLEDLDQELVESTIFVLNPGYLWMFTNCISSALFVLIMRKRIRLTNFKDYDTMFYNNVLALPLLLVFSFIMEDWSTKNLSVNLSADSLAAMVISGLMSVGISYCSGWCVRVTSSTTYSMVGALNKLPIALAGLVFFDAPKNFLSFFSIFLGFLSGLLYAVAKQKKIQQQKVLAATLEK.

Over 1 to 15 (MIYTSSKSLQYLAVP) the chain is Lumenal. A helical membrane pass occupies residues 16–36 (IYTIFKNLTIILIAYGEVLFF). The Cytoplasmic segment spans residues 37–47 (GGKVTSMELTS). The chain crosses the membrane as a helical span at residues 48–68 (FIMMVLSSVVATWGDQQAIAI). The Lumenal portion of the chain corresponds to 69-84 (KASSLEDLDQELVEST). A helical membrane pass occupies residues 85–105 (IFVLNPGYLWMFTNCISSALF). Topologically, residues 106–122 (VLIMRKRIRLTNFKDYD) are cytoplasmic. A helical transmembrane segment spans residues 123–143 (TMFYNNVLALPLLLVFSFIME). Residues 144–159 (DWSTKNLSVNLSADSL) lie on the Lumenal side of the membrane. N-linked (GlcNAc...) asparagine glycosylation is found at asparagine 149 and asparagine 153. The helical transmembrane segment at 160–180 (AAMVISGLMSVGISYCSGWCV) threads the bilayer. Residues 181–186 (RVTSST) are Cytoplasmic-facing. The helical transmembrane segment at 187–207 (TYSMVGALNKLPIALAGLVFF) threads the bilayer. Residues 208 to 211 (DAPK) are Lumenal-facing. The chain crosses the membrane as a helical span at residues 212-232 (NFLSFFSIFLGFLSGLLYAVA). The Cytoplasmic portion of the chain corresponds to 233–249 (KQKKIQQQKVLAATLEK).

It belongs to the TPT transporter family. SLC35D subfamily.

It localises to the golgi apparatus membrane. It is found in the cytoplasmic vesicle membrane. The protein resides in the endoplasmic reticulum membrane. In terms of biological role, involved in the import of GDP-mannose from the cytoplasm into the Golgi lumen. This chain is Probable GDP-mannose transporter 2 (HVG1), found in Saccharomyces cerevisiae (strain RM11-1a) (Baker's yeast).